We begin with the raw amino-acid sequence, 180 residues long: Urease accessory protein UreE (180 aa).

Positions Ala-71–Gly-90 are disordered.

It belongs to the UreE family.

The protein localises to the cytoplasm. Involved in urease metallocenter assembly. Binds nickel. Probably functions as a nickel donor during metallocenter assembly. This Kocuria rhizophila (strain ATCC 9341 / DSM 348 / NBRC 103217 / DC2201) protein is Urease accessory protein UreE.